A 482-amino-acid chain; its full sequence is tRNA sulfurtransferase (482 aa).

A THUMP domain is found at 61-165 (DVTLSVLTQT…NDKLNLIIAR (105 aa)). Residues 183–184 (LI), lysine 265, glycine 287, and glutamine 296 each bind ATP. Cysteines 344 and 456 form a disulfide. The region spanning 404–482 (LGSDVVVLDI…GYKNVKVYRP (79 aa)) is the Rhodanese domain. The active-site Cysteine persulfide intermediate is cysteine 456.

This sequence belongs to the ThiI family.

It is found in the cytoplasm. It carries out the reaction [ThiI sulfur-carrier protein]-S-sulfanyl-L-cysteine + a uridine in tRNA + 2 reduced [2Fe-2S]-[ferredoxin] + ATP + H(+) = [ThiI sulfur-carrier protein]-L-cysteine + a 4-thiouridine in tRNA + 2 oxidized [2Fe-2S]-[ferredoxin] + AMP + diphosphate. The catalysed reaction is [ThiS sulfur-carrier protein]-C-terminal Gly-Gly-AMP + S-sulfanyl-L-cysteinyl-[cysteine desulfurase] + AH2 = [ThiS sulfur-carrier protein]-C-terminal-Gly-aminoethanethioate + L-cysteinyl-[cysteine desulfurase] + A + AMP + 2 H(+). It functions in the pathway cofactor biosynthesis; thiamine diphosphate biosynthesis. Functionally, catalyzes the ATP-dependent transfer of a sulfur to tRNA to produce 4-thiouridine in position 8 of tRNAs, which functions as a near-UV photosensor. Also catalyzes the transfer of sulfur to the sulfur carrier protein ThiS, forming ThiS-thiocarboxylate. This is a step in the synthesis of thiazole, in the thiamine biosynthesis pathway. The sulfur is donated as persulfide by IscS. The sequence is that of tRNA sulfurtransferase from Aliivibrio fischeri (strain MJ11) (Vibrio fischeri).